Here is a 166-residue protein sequence, read N- to C-terminus: NAD(P)H-quinone oxidoreductase subunit I, chloroplastic (166 aa).

4Fe-4S ferredoxin-type domains are found at residues 55 to 84 (GRIH…VDWK) and 95 to 124 (LNYS…MTEE). 8 residues coordinate [4Fe-4S] cluster: Cys-64, Cys-67, Cys-70, Cys-74, Cys-104, Cys-107, Cys-110, and Cys-114.

This sequence belongs to the complex I 23 kDa subunit family. As to quaternary structure, NDH is composed of at least 16 different subunits, 5 of which are encoded in the nucleus. [4Fe-4S] cluster serves as cofactor.

Its subcellular location is the plastid. The protein resides in the chloroplast thylakoid membrane. The enzyme catalyses a plastoquinone + NADH + (n+1) H(+)(in) = a plastoquinol + NAD(+) + n H(+)(out). It catalyses the reaction a plastoquinone + NADPH + (n+1) H(+)(in) = a plastoquinol + NADP(+) + n H(+)(out). NDH shuttles electrons from NAD(P)H:plastoquinone, via FMN and iron-sulfur (Fe-S) centers, to quinones in the photosynthetic chain and possibly in a chloroplast respiratory chain. The immediate electron acceptor for the enzyme in this species is believed to be plastoquinone. Couples the redox reaction to proton translocation, and thus conserves the redox energy in a proton gradient. In Stevia rebaudiana (Stevia), this protein is NAD(P)H-quinone oxidoreductase subunit I, chloroplastic.